The primary structure comprises 407 residues: Serine/threonine transporter SstT (407 aa).

9 helical membrane-spanning segments follow: residues 12-32 (GNLI…GISS), 42-62 (LGIL…FILI), 81-101 (IIIL…LANF), 141-161 (ALSS…GIAL), 179-199 (VLKI…GLVA), 218-238 (ILLV…IVFF), 245-267 (FPLI…SSAA), 288-308 (ISIP…IAIL), and 330-350 (IIAT…LLLI).

This sequence belongs to the dicarboxylate/amino acid:cation symporter (DAACS) (TC 2.A.23) family.

Its subcellular location is the cell inner membrane. It carries out the reaction L-serine(in) + Na(+)(in) = L-serine(out) + Na(+)(out). The enzyme catalyses L-threonine(in) + Na(+)(in) = L-threonine(out) + Na(+)(out). Its function is as follows. Involved in the import of serine and threonine into the cell, with the concomitant import of sodium (symport system). This chain is Serine/threonine transporter SstT, found in Campylobacter jejuni subsp. jejuni serotype O:6 (strain 81116 / NCTC 11828).